Reading from the N-terminus, the 247-residue chain is Protein NipSnap homolog 3B (247 aa).

N6-succinyllysine occurs at positions 45, 48, 57, and 166.

This sequence belongs to the NipSnap family.

Its subcellular location is the cytoplasm. It is found in the cytosol. In Mus musculus (Mouse), this protein is Protein NipSnap homolog 3B (Nipsnap3b).